The chain runs to 109 residues: Thiosulfate sulfurtransferase GlpE (109 aa).

The region spanning 16–104 is the Rhodanese domain; it reads REQGAVVVDI…WRSTYPAETA (89 aa). Cys-64 acts as the Cysteine persulfide intermediate in catalysis.

The protein belongs to the GlpE family.

The protein resides in the cytoplasm. It carries out the reaction thiosulfate + hydrogen cyanide = thiocyanate + sulfite + 2 H(+). The catalysed reaction is thiosulfate + [thioredoxin]-dithiol = [thioredoxin]-disulfide + hydrogen sulfide + sulfite + 2 H(+). Functionally, transferase that catalyzes the transfer of sulfur from thiosulfate to thiophilic acceptors such as cyanide or dithiols. May function in a CysM-independent thiosulfate assimilation pathway by catalyzing the conversion of thiosulfate to sulfite, which can then be used for L-cysteine biosynthesis. This chain is Thiosulfate sulfurtransferase GlpE, found in Pseudomonas fluorescens (strain ATCC BAA-477 / NRRL B-23932 / Pf-5).